The chain runs to 98 residues: DNA-binding protein Fis (98 aa).

A DNA-binding region (H-T-H motif) is located at residues 74–93 (QTRAALMMGINRGTLRKKLK).

The protein belongs to the transcriptional regulatory Fis family. Homodimer.

Functionally, activates ribosomal RNA transcription. Plays a direct role in upstream activation of rRNA promoters. This Yersinia enterocolitica serotype O:8 / biotype 1B (strain NCTC 13174 / 8081) protein is DNA-binding protein Fis.